The following is a 544-amino-acid chain: Chaperonin GroEL (544 aa).

ATP contacts are provided by residues T30–P33, K51, D87–T91, G415, N479–A481, and D495.

Belongs to the chaperonin (HSP60) family. Forms a cylinder of 14 subunits composed of two heptameric rings stacked back-to-back. Interacts with the co-chaperonin GroES.

It localises to the cytoplasm. The enzyme catalyses ATP + H2O + a folded polypeptide = ADP + phosphate + an unfolded polypeptide.. Functionally, together with its co-chaperonin GroES, plays an essential role in assisting protein folding. The GroEL-GroES system forms a nano-cage that allows encapsulation of the non-native substrate proteins and provides a physical environment optimized to promote and accelerate protein folding. This Francisella tularensis subsp. holarctica (strain FTNF002-00 / FTA) protein is Chaperonin GroEL.